A 495-amino-acid chain; its full sequence is MVNLRPDEISSMIRQQIEQFSQQVQFNHVGTVMQVGDGIARVYGLNDVMAGELLEFADGTIGIALNLESDHVGAVLMGDGRNILEGSEVKSSGQIAQVPVGEELLGRVVNALVQPIDGKGGIETKQTRLIESPAPGIVARQSVCEPLQTGITAIDAMIPIGRGQRELIIGDRQTGKTAIALDTIINQKNEDVICVYVAIGQKASSVAAAVNLLATKGAMDYTIVVTANADDAASLQYLAPYTGAAIAEHFMYQGKATLVIYDDLTKQAQAYRQMSLLLRRPPGREAYPGDVFYLHSRLLERAAKLNKELGGGSMTALPIVETQAGDVSAYIPTNVISITDGQIFLSSDLFNAGIRPAINVGISVSRVGSAAQIQSMKKVAGRLKLELAQFDELQAFSQFASDLDKATQMQLARGQRLREVLKQSQASPIPIEEQIAMIYAGVNGWLDKLALEEVQPFLSRVRSELRTSNYPSAVKSKWSEEVEQMLKDVLSKHAQ.

170 to 177 (GDRQTGKT) is an ATP binding site.

It belongs to the ATPase alpha/beta chains family. In terms of assembly, F-type ATPases have 2 components, CF(1) - the catalytic core - and CF(0) - the membrane proton channel. CF(1) has five subunits: alpha(3), beta(3), gamma(1), delta(1), epsilon(1). CF(0) has four main subunits: a, b, b' and c.

The protein resides in the plastid. Its subcellular location is the chloroplast thylakoid membrane. The catalysed reaction is ATP + H2O + 4 H(+)(in) = ADP + phosphate + 5 H(+)(out). In terms of biological role, produces ATP from ADP in the presence of a proton gradient across the membrane. The alpha chain is a regulatory subunit. In Cyanidioschyzon merolae (strain NIES-3377 / 10D) (Unicellular red alga), this protein is ATP synthase subunit alpha, chloroplastic.